The sequence spans 104 residues: L-rhamnose mutarotase (104 aa).

Tyr18 contributes to the substrate binding site. Residue His22 is the Proton donor of the active site. Residues Tyr41 and 76-77 (WW) contribute to the substrate site.

This sequence belongs to the rhamnose mutarotase family. In terms of assembly, homodimer.

It localises to the cytoplasm. It catalyses the reaction alpha-L-rhamnose = beta-L-rhamnose. It functions in the pathway carbohydrate metabolism; L-rhamnose metabolism. Its function is as follows. Involved in the anomeric conversion of L-rhamnose. This chain is L-rhamnose mutarotase, found in Shouchella clausii (strain KSM-K16) (Alkalihalobacillus clausii).